The primary structure comprises 408 residues: Glutamate N-acetyltransferase (408 aa).

Residues Thr-150, Lys-176, Thr-189, Glu-271, Asn-403, and Thr-408 each coordinate substrate. Thr-189 serves as the catalytic Nucleophile.

It belongs to the ArgJ family. Heterotetramer of two alpha and two beta chains.

The protein resides in the cytoplasm. The catalysed reaction is N(2)-acetyl-L-ornithine + L-glutamate = N-acetyl-L-glutamate + L-ornithine. It participates in amino-acid biosynthesis; L-arginine biosynthesis; L-ornithine and N-acetyl-L-glutamate from L-glutamate and N(2)-acetyl-L-ornithine (cyclic): step 1/1. Its function is as follows. Catalyzes the transfer of the acetyl group from N(2)-acetylornithine to glutamate, forming N-acetylglutamate and L-ornithine. This chain is Glutamate N-acetyltransferase, found in Methanococcus maripaludis (strain C7 / ATCC BAA-1331).